The chain runs to 150 residues: Macrodomain Ter protein (150 aa).

The protein belongs to the MatP family. As to quaternary structure, homodimer.

The protein localises to the cytoplasm. Required for spatial organization of the terminus region of the chromosome (Ter macrodomain) during the cell cycle. Prevents early segregation of duplicated Ter macrodomains during cell division. Binds specifically to matS, which is a 13 bp signature motif repeated within the Ter macrodomain. In Shigella boydii serotype 18 (strain CDC 3083-94 / BS512), this protein is Macrodomain Ter protein.